The primary structure comprises 175 residues: Nucleoside-triphosphatase THEP1 (175 aa).

Residues 15–22 and 106–113 each bind ATP; these read GNPGVGKT and VLAIDEIG.

Belongs to the THEP1 NTPase family.

It catalyses the reaction a ribonucleoside 5'-triphosphate + H2O = a ribonucleoside 5'-diphosphate + phosphate + H(+). Has nucleotide phosphatase activity towards ATP, GTP, CTP, TTP and UTP. May hydrolyze nucleoside diphosphates with lower efficiency. This chain is Nucleoside-triphosphatase THEP1, found in Saccharolobus solfataricus (strain ATCC 35092 / DSM 1617 / JCM 11322 / P2) (Sulfolobus solfataricus).